The primary structure comprises 189 residues: Elongation factor P (189 aa).

It belongs to the elongation factor P family.

The protein resides in the cytoplasm. Its pathway is protein biosynthesis; polypeptide chain elongation. Functionally, involved in peptide bond synthesis. Stimulates efficient translation and peptide-bond synthesis on native or reconstituted 70S ribosomes in vitro. Probably functions indirectly by altering the affinity of the ribosome for aminoacyl-tRNA, thus increasing their reactivity as acceptors for peptidyl transferase. In Aster yellows witches'-broom phytoplasma (strain AYWB), this protein is Elongation factor P.